Reading from the N-terminus, the 197-residue chain is Imidazoleglycerol-phosphate dehydratase (197 aa).

It belongs to the imidazoleglycerol-phosphate dehydratase family.

It localises to the cytoplasm. It catalyses the reaction D-erythro-1-(imidazol-4-yl)glycerol 3-phosphate = 3-(imidazol-4-yl)-2-oxopropyl phosphate + H2O. It participates in amino-acid biosynthesis; L-histidine biosynthesis; L-histidine from 5-phospho-alpha-D-ribose 1-diphosphate: step 6/9. The sequence is that of Imidazoleglycerol-phosphate dehydratase from Pseudomonas fluorescens (strain ATCC BAA-477 / NRRL B-23932 / Pf-5).